Consider the following 553-residue polypeptide: Hydroxylamine reductase (553 aa).

Residues Cys-3, Cys-6, Cys-15, and Cys-21 each coordinate [4Fe-4S] cluster. Hybrid [4Fe-2O-2S] cluster contacts are provided by His-244, Glu-268, Cys-312, Cys-406, Cys-434, Cys-459, Glu-494, and Lys-496. The residue at position 406 (Cys-406) is a Cysteine persulfide.

This sequence belongs to the HCP family. Monomer. Requires [4Fe-4S] cluster as cofactor. The cofactor is hybrid [4Fe-2O-2S] cluster.

It is found in the cytoplasm. The catalysed reaction is A + NH4(+) + H2O = hydroxylamine + AH2 + H(+). Its function is as follows. Catalyzes the reduction of hydroxylamine to form NH(3) and H(2)O. The protein is Hydroxylamine reductase of Nitratidesulfovibrio vulgaris (strain ATCC 29579 / DSM 644 / CCUG 34227 / NCIMB 8303 / VKM B-1760 / Hildenborough) (Desulfovibrio vulgaris).